Consider the following 313-residue polypeptide: 4-hydroxy-3-methylbut-2-enyl diphosphate reductase (313 aa).

Cysteine 20 lines the [4Fe-4S] cluster pocket. Residues histidine 49 and histidine 82 each coordinate (2E)-4-hydroxy-3-methylbut-2-enyl diphosphate. Dimethylallyl diphosphate-binding residues include histidine 49 and histidine 82. Isopentenyl diphosphate contacts are provided by histidine 49 and histidine 82. Cysteine 104 is a binding site for [4Fe-4S] cluster. Histidine 132 provides a ligand contact to (2E)-4-hydroxy-3-methylbut-2-enyl diphosphate. Histidine 132 contributes to the dimethylallyl diphosphate binding site. Position 132 (histidine 132) interacts with isopentenyl diphosphate. The active-site Proton donor is the glutamate 134. Threonine 172 lines the (2E)-4-hydroxy-3-methylbut-2-enyl diphosphate pocket. Cysteine 201 serves as a coordination point for [4Fe-4S] cluster. The (2E)-4-hydroxy-3-methylbut-2-enyl diphosphate site is built by serine 229, serine 230, asparagine 231, and serine 273. 4 residues coordinate dimethylallyl diphosphate: serine 229, serine 230, asparagine 231, and serine 273. 4 residues coordinate isopentenyl diphosphate: serine 229, serine 230, asparagine 231, and serine 273.

The protein belongs to the IspH family. It depends on [4Fe-4S] cluster as a cofactor.

The enzyme catalyses isopentenyl diphosphate + 2 oxidized [2Fe-2S]-[ferredoxin] + H2O = (2E)-4-hydroxy-3-methylbut-2-enyl diphosphate + 2 reduced [2Fe-2S]-[ferredoxin] + 2 H(+). It carries out the reaction dimethylallyl diphosphate + 2 oxidized [2Fe-2S]-[ferredoxin] + H2O = (2E)-4-hydroxy-3-methylbut-2-enyl diphosphate + 2 reduced [2Fe-2S]-[ferredoxin] + 2 H(+). It functions in the pathway isoprenoid biosynthesis; dimethylallyl diphosphate biosynthesis; dimethylallyl diphosphate from (2E)-4-hydroxy-3-methylbutenyl diphosphate: step 1/1. The protein operates within isoprenoid biosynthesis; isopentenyl diphosphate biosynthesis via DXP pathway; isopentenyl diphosphate from 1-deoxy-D-xylulose 5-phosphate: step 6/6. In terms of biological role, catalyzes the conversion of 1-hydroxy-2-methyl-2-(E)-butenyl 4-diphosphate (HMBPP) into a mixture of isopentenyl diphosphate (IPP) and dimethylallyl diphosphate (DMAPP). Acts in the terminal step of the DOXP/MEP pathway for isoprenoid precursor biosynthesis. This is 4-hydroxy-3-methylbut-2-enyl diphosphate reductase from Desulfotalea psychrophila (strain LSv54 / DSM 12343).